The following is a 488-amino-acid chain: Malonate-semialdehyde dehydrogenase 1 (488 aa).

NAD(+) is bound by residues Phe156, Lys180, Glu183, Arg184, Ser233, and Ser255. The Nucleophile role is filled by Cys288. Residue Glu387 participates in NAD(+) binding.

The protein belongs to the aldehyde dehydrogenase family. IolA subfamily. As to quaternary structure, homotetramer.

The catalysed reaction is 3-oxopropanoate + NAD(+) + CoA + H2O = hydrogencarbonate + acetyl-CoA + NADH + H(+). The enzyme catalyses 2-methyl-3-oxopropanoate + NAD(+) + CoA + H2O = propanoyl-CoA + hydrogencarbonate + NADH + H(+). Its pathway is polyol metabolism; myo-inositol degradation into acetyl-CoA; acetyl-CoA from myo-inositol: step 7/7. In terms of biological role, catalyzes the oxidation of malonate semialdehyde (MSA) and methylmalonate semialdehyde (MMSA) into acetyl-CoA and propanoyl-CoA, respectively. Is involved in a myo-inositol catabolic pathway. Bicarbonate, and not CO2, is the end-product of the enzymatic reaction. This is Malonate-semialdehyde dehydrogenase 1 from Geobacillus kaustophilus (strain HTA426).